The primary structure comprises 949 residues: Multimerin-2 (949 aa).

The first 22 residues, 1 to 22, serve as a signal peptide directing secretion; the sequence is MILSLLFSLGGPLGWGLLGAWA. Positions 54–132 constitute an EMI domain; the sequence is GRNWCPYPMS…PGYTGPNCEH (79 aa). Cystine bridges form between C58–C122, C85–C92, and C121–C130. O-linked (Fuc...) serine glycosylation is present at S63. T67 carries O-linked (Fuc) threonine glycosylation. The O-linked (Fuc) threonine glycan is linked to T115. Residues 133–157 are disordered; sequence HDSMAIPEPADPGDSHQEPQDGPVS. Positions 167 to 187 form a coiled coil; the sequence is INEVEVQQEQQEHLLGDLQND. 8 N-linked (GlcNAc...) asparagine glycosylation sites follow: N205, N214, N249, N261, N350, N379, N439, and N472. 3 coiled-coil regions span residues 292–487, 547–596, and 688–711; these read KFEA…DLIK, VDAH…HSAF, and EAAT…VKNV. N-linked (GlcNAc...) asparagine glycans are attached at residues N727 and N765. Residues 779 to 801 form a disordered region; it reads RKGKKQQKDLEAPRKRDKKEAEP. The segment covering 784-800 has biased composition (basic and acidic residues); it reads QQKDLEAPRKRDKKEAE. A C1q domain is found at 821 to 949; sequence EAGSPVAFYA…AFGGFLMFKT (129 aa). N845 is a glycosylation site (N-linked (GlcNAc...) asparagine).

As to quaternary structure, heteromer of p110, p125, p140 and p200 subunits; disulfide-linked. Interacts with VEGFA. Interacts with CD93; this interaction promotes angiogenesis. Interacts with CD248. Post-translationally, N- and O-glycosylated. In terms of processing, O-fucosylated within the EMI domain (at Ser-63, Thr-67 and Thr-115) by FUT10/POFUT3 and FUT11/POFUT4. Processed by matrix metalloproteinases (MMPs) including MMP9 and, to a lesser degree, by MMP2 upon angiogenic stimulation. In terms of tissue distribution, endothelium.

The protein resides in the secreted. The protein localises to the extracellular space. Its subcellular location is the extracellular matrix. Extracellular matrix protein that plays significant roles in the vascular system and is required for the maintenance and stability of blood vessel. Affects several essential steps in angiogenesis including endothelial cell proliferation, migration, and tube formation. Positively regulates angiogenesis by acting as a ligand for CD93 receptor. This is Multimerin-2 (MMRN2) from Homo sapiens (Human).